Reading from the N-terminus, the 50-residue chain is MAVPKKRTSISKKLIRKNFWKKRGYWTALKAFSLAQSIFTGNSKSFFCNK.

It belongs to the bacterial ribosomal protein bL32 family.

It is found in the plastid. The protein localises to the chloroplast. This chain is Large ribosomal subunit protein bL32c, found in Lotus japonicus (Lotus corniculatus var. japonicus).